Here is a 286-residue protein sequence, read N- to C-terminus: MTDAAGRVEPSGVWATAVGVARVRAMETAREQPLFRDPLALAFATAGGRGPGTLSPPRADEAARRRWLEVALSIVIRTKFLDDLLNRAVASGVRQVVLLGAGMDSRAFRMDWPTGTRLFEVDTAEPLGFKASVLRQERAVARCERITVPVDLREDWPGALAAAGHDPAQPTVWIAEGLLIYLPADAVQSLLERVGALSAAGSRMGLTLGTRGVVERFRGDAAAGSAASMWVSEMPEDPVGWLDGLGWQAETFTLRDRAAAYGRPLLTPSQQDEGTGALVSAVRTAH.

S-adenosyl-L-methionine contacts are provided by residues aspartate 122 and 151–152 (DL).

This sequence belongs to the UPF0677 family.

Functionally, exhibits S-adenosyl-L-methionine-dependent methyltransferase activity. The chain is Putative S-adenosyl-L-methionine-dependent methyltransferase FRAAL3718 from Frankia alni (strain DSM 45986 / CECT 9034 / ACN14a).